We begin with the raw amino-acid sequence, 153 residues long: UPF0266 membrane protein YE1773 (153 aa).

Transmembrane regions (helical) follow at residues 6–26 (IVLIVFIALLLAYAIYDEFIM), 45–65 (IDCAIFVGLIAILVYNNVMAN), and 67–87 (EPLTTYLLVGLALIAFYLSYI).

It belongs to the UPF0266 family.

It localises to the cell inner membrane. The sequence is that of UPF0266 membrane protein YE1773 from Yersinia enterocolitica serotype O:8 / biotype 1B (strain NCTC 13174 / 8081).